A 157-amino-acid polypeptide reads, in one-letter code: Protein Smg homolog (157 aa).

The protein belongs to the Smg family.

In Xanthomonas euvesicatoria pv. vesicatoria (strain 85-10) (Xanthomonas campestris pv. vesicatoria), this protein is Protein Smg homolog.